Here is a 121-residue protein sequence, read N- to C-terminus: Piercer of microtubule wall 2 protein (121 aa).

Residues M1–S10 show a composition bias toward basic and acidic residues. The interval M1–V29 is disordered.

Belongs to the PIERCE2 family. Microtubule inner protein component of sperm flagellar doublet microtubules. Interacts with CFAP53, ODAD1 and ODAD3; the interactions link the outer dynein arms docking complex (ODA-DC) to the internal microtubule inner proteins (MIP) in cilium axoneme. In terms of tissue distribution, expressed in airway epithelial cells.

Its subcellular location is the cytoplasm. It localises to the cytoskeleton. It is found in the cilium axoneme. The protein localises to the flagellum axoneme. Microtubule inner protein involved in the attachment of outer dynein arms (ODAs) to dynein-decorated doublet microtubules (DMTs) in cilia axoneme, which is required for motile cilia beating. This Homo sapiens (Human) protein is Piercer of microtubule wall 2 protein.